A 476-amino-acid polypeptide reads, in one-letter code: Aspartyl/glutamyl-tRNA(Asn/Gln) amidotransferase subunit B (476 aa).

This sequence belongs to the GatB/GatE family. GatB subfamily. Heterotrimer of A, B and C subunits.

It catalyses the reaction L-glutamyl-tRNA(Gln) + L-glutamine + ATP + H2O = L-glutaminyl-tRNA(Gln) + L-glutamate + ADP + phosphate + H(+). The enzyme catalyses L-aspartyl-tRNA(Asn) + L-glutamine + ATP + H2O = L-asparaginyl-tRNA(Asn) + L-glutamate + ADP + phosphate + 2 H(+). Allows the formation of correctly charged Asn-tRNA(Asn) or Gln-tRNA(Gln) through the transamidation of misacylated Asp-tRNA(Asn) or Glu-tRNA(Gln) in organisms which lack either or both of asparaginyl-tRNA or glutaminyl-tRNA synthetases. The reaction takes place in the presence of glutamine and ATP through an activated phospho-Asp-tRNA(Asn) or phospho-Glu-tRNA(Gln). In Clostridium botulinum (strain Alaska E43 / Type E3), this protein is Aspartyl/glutamyl-tRNA(Asn/Gln) amidotransferase subunit B.